Consider the following 429-residue polypeptide: MSTALLDAVVKKNRVRLIPFMLALYVLAFLDRSNIGFAKQTYQIDTGLSNEAYALGAGIFFVVYAFLGVPANLLMRKLGARTWIGTTTLLWGFLSAAMAWADTEAKFLIVRTLLRAAEAGFFPGMIYLTSQWFPQRNRASIMGLFYMGAPLALTLGSPLSGALLEMHGFMGHPGWFWMFVIEGLLAVGAGVFTFFWLDDTPEQARFLSKQEKTLLINQLASEEQQKVTSRLSDALRNGRVWQLAIIYLTIQVAVYGLIFFLPTQVAALLGTKVGFTASVVTAIPWVAALFGTWLIPRYSDKTGERRNVAALTLLAAGIGIGLSGLLSPVMAIVALCVAAIGFIAVQPVFWTMPTQLLSGTALAAGIGFVNLFGAVGGFIAPILRVKAETLFASDAAGLLTLAAVAVIGSLIIFTLRVNRTVAQTDVAHH.

The Cytoplasmic segment spans residues 1–16 (MSTALLDAVVKKNRVR). The chain crosses the membrane as a helical span at residues 17 to 37 (LIPFMLALYVLAFLDRSNIGF). Topologically, residues 38 to 54 (AKQTYQIDTGLSNEAYA) are periplasmic. A helical transmembrane segment spans residues 55 to 75 (LGAGIFFVVYAFLGVPANLLM). Topologically, residues 76–81 (RKLGAR) are cytoplasmic. A helical membrane pass occupies residues 82 to 102 (TWIGTTTLLWGFLSAAMAWAD). At 103–143 (TEAKFLIVRTLLRAAEAGFFPGMIYLTSQWFPQRNRASIMG) the chain is on the periplasmic side. Residues 144–164 (LFYMGAPLALTLGSPLSGALL) traverse the membrane as a helical segment. The Cytoplasmic portion of the chain corresponds to 165 to 174 (EMHGFMGHPG). A helical transmembrane segment spans residues 175-195 (WFWMFVIEGLLAVGAGVFTFF). Residues 196 to 242 (WLDDTPEQARFLSKQEKTLLINQLASEEQQKVTSRLSDALRNGRVWQ) are Periplasmic-facing. The helical transmembrane segment at 243–263 (LAIIYLTIQVAVYGLIFFLPT) threads the bilayer. The Cytoplasmic portion of the chain corresponds to 264 to 274 (QVAALLGTKVG). The chain crosses the membrane as a helical span at residues 275 to 295 (FTASVVTAIPWVAALFGTWLI). The Periplasmic segment spans residues 296–324 (PRYSDKTGERRNVAALTLLAAGIGIGLSG). The helical transmembrane segment at 325 to 345 (LLSPVMAIVALCVAAIGFIAV) threads the bilayer. Topologically, residues 346–361 (QPVFWTMPTQLLSGTA) are cytoplasmic. The chain crosses the membrane as a helical span at residues 362-382 (LAAGIGFVNLFGAVGGFIAPI). Over 383–394 (LRVKAETLFASD) the chain is Periplasmic. The chain crosses the membrane as a helical span at residues 395–415 (AAGLLTLAAVAVIGSLIIFTL). The Cytoplasmic portion of the chain corresponds to 416–429 (RVNRTVAQTDVAHH).

The protein belongs to the major facilitator superfamily. Phthalate permease family.

The protein resides in the cell inner membrane. The sequence is that of Inner membrane transport protein RhmT (rhmT) from Escherichia coli (strain K12).